A 310-amino-acid polypeptide reads, in one-letter code: tRNA-cytidine(32) 2-sulfurtransferase (310 aa).

The PP-loop motif motif lies at 58 to 63; the sequence is SGGKDS. [4Fe-4S] cluster contacts are provided by Cys-133, Cys-136, and Cys-224.

Belongs to the TtcA family. Homodimer. It depends on Mg(2+) as a cofactor. [4Fe-4S] cluster is required as a cofactor.

The protein resides in the cytoplasm. It catalyses the reaction cytidine(32) in tRNA + S-sulfanyl-L-cysteinyl-[cysteine desulfurase] + AH2 + ATP = 2-thiocytidine(32) in tRNA + L-cysteinyl-[cysteine desulfurase] + A + AMP + diphosphate + H(+). It functions in the pathway tRNA modification. Functionally, catalyzes the ATP-dependent 2-thiolation of cytidine in position 32 of tRNA, to form 2-thiocytidine (s(2)C32). The sulfur atoms are provided by the cysteine/cysteine desulfurase (IscS) system. This is tRNA-cytidine(32) 2-sulfurtransferase from Paracidovorax citrulli (strain AAC00-1) (Acidovorax citrulli).